A 616-amino-acid chain; its full sequence is Proline--tRNA ligase (616 aa).

It belongs to the class-II aminoacyl-tRNA synthetase family. ProS type 1 subfamily. Homodimer.

It localises to the cytoplasm. The enzyme catalyses tRNA(Pro) + L-proline + ATP = L-prolyl-tRNA(Pro) + AMP + diphosphate. Functionally, catalyzes the attachment of proline to tRNA(Pro) in a two-step reaction: proline is first activated by ATP to form Pro-AMP and then transferred to the acceptor end of tRNA(Pro). As ProRS can inadvertently accommodate and process non-cognate amino acids such as alanine and cysteine, to avoid such errors it has two additional distinct editing activities against alanine. One activity is designated as 'pretransfer' editing and involves the tRNA(Pro)-independent hydrolysis of activated Ala-AMP. The other activity is designated 'posttransfer' editing and involves deacylation of mischarged Ala-tRNA(Pro). The misacylated Cys-tRNA(Pro) is not edited by ProRS. The polypeptide is Proline--tRNA ligase (Streptococcus mutans serotype c (strain ATCC 700610 / UA159)).